Consider the following 271-residue polypeptide: NAD kinase (271 aa).

Aspartate 52 functions as the Proton acceptor in the catalytic mechanism. Residues 52 to 53 (DG), 129 to 130 (NE), arginine 155, aspartate 157, and alanine 192 each bind NAD(+).

The protein belongs to the NAD kinase family. Requires a divalent metal cation as cofactor.

It localises to the cytoplasm. The enzyme catalyses NAD(+) + ATP = ADP + NADP(+) + H(+). Its function is as follows. Involved in the regulation of the intracellular balance of NAD and NADP, and is a key enzyme in the biosynthesis of NADP. Catalyzes specifically the phosphorylation on 2'-hydroxyl of the adenosine moiety of NAD to yield NADP. In Geobacillus stearothermophilus (Bacillus stearothermophilus), this protein is NAD kinase.